The following is a 500-amino-acid chain: Zinc finger protein PLAG1 (500 aa).

The tract at residues 1–30 is disordered; the sequence is MATVIPGDLSEVRDTQKVPSGKRKRGETKP. Positions 2 to 84 are interaction with KPNA2; that stretch reads ATVIPGDLSE…SKYKLQRHMA (83 aa). The Nuclear localization signal motif lies at 22 to 25; the sequence is KRKR. 7 C2H2-type zinc fingers span residues 34-56, 62-86, 92-114, 121-143, 150-172, 185-207, and 213-236; these read FPCQLCDKAFNSVEKLKVHSYSH, YKCIQQDCTKAFVSKYKLQRHMATH, HKCNYCEKMFHRKDHLKNHLHTH, FKCEECGKNYNTKLGFKRHLALH, LTCKVCLQTFESTGVLLEHLKSH, HQCEHCDRRFYTRKDVRRHMVVH, and FLCQYCAQRFGRKDHLTRHMKKSH. The decreased nuclear import with localization in the nucleus but also in the cytoplasm stretch occupies residues 41-242; sequence KAFNSVEKLK…KKSHNQELLK (202 aa). The interval 243 to 384 is repression domain; contains 3 sumoylation motifs and massively decrease transcription activity; sequence VKTEPVDFLD…QASSSSKLGL (142 aa). Positions 243–500 are activates transcription; Inhibition of nuclear import due to lack of NLS and KPNA2 interaction; that stretch reads VKTEPVDFLD…TLPRFHQAFQ (258 aa). Residues Lys244 and Lys263 each participate in a glycyl lysine isopeptide (Lys-Gly) (interchain with G-Cter in SUMO) cross-link. Residues 365-388 are disordered; it reads GGVPSSSQDSQASSSSKLGLDPQI. Residues 369-380 are compositionally biased toward low complexity; that stretch reads SSSQDSQASSSS. The massively activates transcription stretch occupies residues 385 to 500; the sequence is DPQIGSLDDG…TLPRFHQAFQ (116 aa).

Belongs to the krueppel C2H2-type zinc-finger protein family. Interacts with KPNA2, which escorts protein to the nucleus via interaction with nuclear localization signal. Interacts with E3 SUMO-protein ligase PIAS1, PIAS2 and PIAS4. In terms of processing, sumoylated with SUMO1; which inhibits transcriptional activity, but does not affect nuclear localization. Blockers of sumoylation pathway such as SENP3 and inactive UBE2I increases transcriptional capacity. Sumoylation is increased in the presence of PIAS1. Acetylated by lysine acetyltransferase EP300; which activates transcriptional capacity. Lysine residues that are sumoylated also seem to be target for acetylation. In terms of tissue distribution, expressed in fetal tissues such as lung, liver and kidney. Not detected or weak detection in normal adult tissues, but highly expressed in salivary gland with benign or malignant pleiomorphic adenomas with or without 8q12 aberrations, with preferential occurrence in benign tumors.

It is found in the nucleus. Its function is as follows. Transcription factor whose activation results in up-regulation of target genes, such as IGFII, leading to uncontrolled cell proliferation: when overexpressed in cultured cells, higher proliferation rate and transformation are observed. Other target genes such as CRLF1, CRABP2, CRIP2, PIGF are strongly induced in cells with PLAG1 induction. Proto-oncogene whose ectopic expression can trigger the development of pleomorphic adenomas of the salivary gland and lipoblastomas. Overexpression is associated with up-regulation of IGFII, is frequently observed in hepatoblastoma, common primary liver tumor in childhood. Cooperates with CBFB-MYH11, a fusion gene important for myeloid leukemia. The chain is Zinc finger protein PLAG1 (PLAG1) from Homo sapiens (Human).